The sequence spans 278 residues: Coiled-coil domain-containing protein 106 (278 aa).

A coiled-coil region spans residues 61-99 (AQLHLALERNSWLQKRIEDLEEERDFLRCQLDKFISSAR). Residues 102 to 119 (ADDHCRGKPGPRRAEGDG) are compositionally biased toward basic and acidic residues. A disordered region spans residues 102–174 (ADDHCRGKPG…KPKARERQRV (73 aa)). S128 carries the phosphoserine modification. A compositionally biased stretch (low complexity) spans 131 to 144 (ESAASSLSGASEEG). Positions 150–166 (KRQKQKGGPGRRRFGKP) are enriched in basic residues. Residues 151 to 164 (RQKQKGGPGRRRFG) carry the Bipartite nuclear localization signal motif.

Interacts with p53/TP53.

It is found in the nucleus. In terms of biological role, promotes the degradation of p53/TP53 protein and inhibits its transactivity. This chain is Coiled-coil domain-containing protein 106 (CCDC106), found in Bos taurus (Bovine).